The primary structure comprises 942 residues: Glutamyl aminopeptidase (942 aa).

Over 1–14 the chain is Cytoplasmic; that stretch reads MSTDSKRYCIKTKH. A helical; Signal-anchor for type II membrane protein transmembrane segment spans residues 15–35; that stretch reads VAIICAAVVAVGLIVGLSVGL. The Extracellular portion of the chain corresponds to 36–942; that stretch reads TRSCDSKDGG…RDTIRDWFFN (907 aa). Residues 40–74 form a disordered region; that stretch reads DSKDGGQGTTQSPSHLPPTSSPPQDQGVCPASEDE. Asn-110, Asn-114, and Asn-187 each carry an N-linked (GlcNAc...) asparagine glycan. Residue Glu-213 coordinates substrate. Asn-314 is a glycosylation site (N-linked (GlcNAc...) asparagine). 347-351 contacts substrate; the sequence is GAMEN. An N-linked (GlcNAc...) asparagine glycan is attached at Asn-367. His-383 is a binding site for Zn(2+). Glu-384 serves as the catalytic Proton acceptor. His-387 and Glu-406 together coordinate Zn(2+). Residues Asn-557, Asn-579, Asn-587, Asn-597, Asn-632, Asn-668, Asn-753, Asn-786, and Asn-791 are each glycosylated (N-linked (GlcNAc...) asparagine). Arg-877 provides a ligand contact to substrate.

Belongs to the peptidase M1 family. As to quaternary structure, homodimer; disulfide-linked. Zn(2+) serves as cofactor.

Its subcellular location is the cell membrane. It carries out the reaction Release of N-terminal glutamate (and to a lesser extent aspartate) from a peptide.. Its activity is regulated as follows. Substrate specificity is modulated by calcium which enhances the enzymatic activity for cleavage of acidic residues while reducing its activity with basic residues. Inhibited by aminopeptidase inhibitors amastatin and bestatin. In terms of biological role, regulates central hypertension through its calcium-modulated preference to cleave N-terminal acidic residues from peptides such as angiotensin II. In Sus scrofa (Pig), this protein is Glutamyl aminopeptidase (ENPEP).